A 118-amino-acid chain; its full sequence is NADPH-dependent 7-cyano-7-deazaguanine reductase (118 aa).

The active-site Thioimide intermediate is Cys-31. The active-site Proton donor is Asp-38. Residues 53–55 (VEL) and 72–73 (YE) each bind substrate.

Belongs to the GTP cyclohydrolase I family. QueF type 1 subfamily.

It localises to the cytoplasm. It catalyses the reaction 7-aminomethyl-7-carbaguanine + 2 NADP(+) = 7-cyano-7-deazaguanine + 2 NADPH + 3 H(+). It functions in the pathway tRNA modification; tRNA-queuosine biosynthesis. Functionally, catalyzes the NADPH-dependent reduction of 7-cyano-7-deazaguanine (preQ0) to 7-aminomethyl-7-deazaguanine (preQ1). The sequence is that of NADPH-dependent 7-cyano-7-deazaguanine reductase from Chlorobium phaeobacteroides (strain BS1).